Consider the following 306-residue polypeptide: Homoserine kinase (306 aa).

91-101 lines the ATP pocket; it reads PLARGLGSSAT.

This sequence belongs to the GHMP kinase family. Homoserine kinase subfamily.

The protein resides in the cytoplasm. It carries out the reaction L-homoserine + ATP = O-phospho-L-homoserine + ADP + H(+). It participates in amino-acid biosynthesis; L-threonine biosynthesis; L-threonine from L-aspartate: step 4/5. Functionally, catalyzes the ATP-dependent phosphorylation of L-homoserine to L-homoserine phosphate. The polypeptide is Homoserine kinase (Synechocystis sp. (strain ATCC 27184 / PCC 6803 / Kazusa)).